We begin with the raw amino-acid sequence, 82 residues long: Probable tautomerase XF_1725 (82 aa).

Pro-2 functions as the Proton acceptor; via imino nitrogen in the catalytic mechanism.

The protein belongs to the 4-oxalocrotonate tautomerase family.

The chain is Probable tautomerase XF_1725 from Xylella fastidiosa (strain 9a5c).